A 375-amino-acid chain; its full sequence is MSQLELSNRMLTLHRFPQMREESPLQAWDAADEYLLNHLDNLPVNGPTLIFNDTFGALACALAGEGVWSISDSWLNQQATRQNLALNQLDEGDVRLLDSLAPLPGAPARVLIKVPKTLALLEKQLRALRAVVTPETQIVAAGKAKEIHTSTLQLFEKILGPTTTSLAWKKARLIYATFTQPELAESEVISRWPLDGTPWQIHNHANVFARGGLDIGARFFMQHLPDDIDGEIVDLGCGNGVIGLMALRQNPLAQVHFLDESYMAVASSRMNVELNCPDDLARCEFRVNNALAGYPSDRLHAVLCNPPFHQQNAVTDHIAWQMFRDARRCLQYGGELRIVGNRHLDYYHKMKKLFGNCTTVATHQKFVILRSVKMP.

This sequence belongs to the methyltransferase superfamily. RlmG family.

The protein localises to the cytoplasm. It carries out the reaction guanosine(1835) in 23S rRNA + S-adenosyl-L-methionine = N(2)-methylguanosine(1835) in 23S rRNA + S-adenosyl-L-homocysteine + H(+). Its function is as follows. Specifically methylates the guanine in position 1835 (m2G1835) of 23S rRNA. In Erwinia tasmaniensis (strain DSM 17950 / CFBP 7177 / CIP 109463 / NCPPB 4357 / Et1/99), this protein is Ribosomal RNA large subunit methyltransferase G.